Consider the following 249-residue polypeptide: Small ribosomal subunit protein uS3y (249 aa).

The region spanning 21 to 92 (LNEVLTRELA…SVELYAEKVN (72 aa)) is the KH type-2 domain. Ser212 is subject to Phosphoserine.

It belongs to the universal ribosomal protein uS3 family.

The protein is Small ribosomal subunit protein uS3y (RPS3B) of Arabidopsis thaliana (Mouse-ear cress).